Here is a 510-residue protein sequence, read N- to C-terminus: Fumarate hydratase, mitochondrial (510 aa).

Residues 1–44 (MYRALRLLARSRPLVRAPAAALASAPGLGGAAVPSFWPPNAARM) constitute a mitochondrion transit peptide. An N6-acetyllysine; alternate mark is found at K61, K66, and K80. An N6-succinyllysine; alternate mark is found at K61, K66, and K80. Phosphothreonine is present on residues T85 and T90. An N6-acetyllysine modification is found at K94. N6-acetyllysine; alternate occurs at positions 115 and 122. An N6-succinyllysine; alternate mark is found at K115 and K122. Residues 145–147 (SGT), 176–179 (HPND), and 186–188 (SSN) each bind substrate. An N6-acetyllysine modification is found at K213. N6-acetyllysine; alternate is present on K223. K223 is modified (N6-succinyllysine; alternate). T234 provides a ligand contact to substrate. Residue H235 is the Proton donor/acceptor of the active site. Position 236 is a phosphothreonine; by PRKDC (T236). At K256 the chain carries N6-acetyllysine. K292 is modified (N6-acetyllysine; alternate). K292 bears the N6-succinyllysine; alternate mark. Residue S365 is part of the active site. Substrate-binding positions include S366 and 371–373 (KVN). S366 carries the post-translational modification Phosphoserine. K467 and K473 each carry N6-succinyllysine. K502 bears the N6-acetyllysine mark.

This sequence belongs to the class-II fumarase/aspartase family. Fumarase subfamily. Homotetramer. Interacts with H2AZ1. In terms of processing, phosphorylation at Thr-236 by PRKDC in response to DNA damage promotes translocation to the nucleus and recruitment to DNA double-strand breaks (DSBs). In terms of tissue distribution, expressed in red blood cells; underexpressed in red blood cells (cytoplasm) of patients with hereditary non-spherocytic hemolytic anemia of unknown etiology.

The protein localises to the mitochondrion. It localises to the cytoplasm. The protein resides in the cytosol. Its subcellular location is the nucleus. It is found in the chromosome. It carries out the reaction (S)-malate = fumarate + H2O. Its pathway is carbohydrate metabolism; tricarboxylic acid cycle; (S)-malate from fumarate: step 1/1. Catalyzes the reversible stereospecific interconversion of fumarate to L-malate. Experiments in other species have demonstrated that specific isoforms of this protein act in defined pathways and favor one direction over the other. Functionally, catalyzes the hydration of fumarate to L-malate in the tricarboxylic acid (TCA) cycle to facilitate a transition step in the production of energy in the form of NADH. Its function is as follows. Catalyzes the dehydration of L-malate to fumarate. Fumarate metabolism in the cytosol plays a role during urea cycle and arginine metabolism; fumarate being a by-product of the urea cycle and amino-acid catabolism. Also plays a role in DNA repair by promoting non-homologous end-joining (NHEJ). In response to DNA damage and phosphorylation by PRKDC, translocates to the nucleus and accumulates at DNA double-strand breaks (DSBs): acts by catalyzing formation of fumarate, an inhibitor of KDM2B histone demethylase activity, resulting in enhanced dimethylation of histone H3 'Lys-36' (H3K36me2). This is Fumarate hydratase, mitochondrial from Homo sapiens (Human).